Here is a 216-residue protein sequence, read N- to C-terminus: Homologous-pairing protein 2 (216 aa).

It belongs to the HOP2 family. In terms of assembly, interacts with mcp7.

The protein resides in the nucleus. Its function is as follows. Required for proper homologous pairing and efficient cross-over and intragenic recombination during meiosis. Acts indirectly in a process facilitating homologous recombination. Acts during mid- to late-horse-tail period. In Schizosaccharomyces pombe (strain 972 / ATCC 24843) (Fission yeast), this protein is Homologous-pairing protein 2 (meu13).